Here is a 140-residue protein sequence, read N- to C-terminus: ATP synthase epsilon chain (140 aa).

The protein belongs to the ATPase epsilon chain family. F-type ATPases have 2 components, CF(1) - the catalytic core - and CF(0) - the membrane proton channel. CF(1) has five subunits: alpha(3), beta(3), gamma(1), delta(1), epsilon(1). CF(0) has three main subunits: a, b and c.

It localises to the cell inner membrane. Produces ATP from ADP in the presence of a proton gradient across the membrane. In Vibrio parahaemolyticus serotype O3:K6 (strain RIMD 2210633), this protein is ATP synthase epsilon chain.